The following is a 102-amino-acid chain: Anti-lipopolysaccharide factor (102 aa).

Cys-32 and Cys-53 are joined by a disulfide.

Its function is as follows. Binds tightly to LPS and thus specifically inhibits the LPS-mediated activation of the hemolymph coagulation. It has a strong antibacterial effect especially on the growth of Gram-negative bacteria. In Tachypleus tridentatus (Japanese horseshoe crab), this protein is Anti-lipopolysaccharide factor.